A 478-amino-acid chain; its full sequence is Zinc metalloproteinase/disintegrin (478 aa).

The first 20 residues, 1-20, serve as a signal peptide directing secretion; the sequence is MIEVLLVTICLAAFPYQGSS. Positions 21–187 are excised as a propeptide; sequence IILESGNVND…PIKKASQSNL (167 aa). 3 disulfide bridges follow: Cys304–Cys384, Cys344–Cys368, and Cys346–Cys351. His329 contacts Zn(2+). Residue Glu330 is part of the active site. Zn(2+)-binding residues include His333 and His339. The propeptide occupies 390 to 405; sequence LRTDTVSTPVSGNELL. One can recognise a Disintegrin domain in the interval 397 to 478; it reads TPVSGNELLE…AGCPRNPFHA (82 aa). Cystine bridges form between Cys411–Cys426, Cys413–Cys421, Cys420–Cys443, Cys434–Cys440, Cys439–Cys464, and Cys452–Cys471. Residues 456–458 carry the Cell attachment site motif; the sequence is RGD.

Belongs to the venom metalloproteinase (M12B) family. P-II subfamily. P-IIa sub-subfamily. Monomer. As to expression, expressed by the venom gland.

The protein localises to the secreted. Functionally, binds alpha-5/beta-1 (ITGAV/ITGB1), alpha-V/beta-3 (ITGAV/ITGB3) and alpha-M/beta-2 (ITGAM/ITGB2) integrins. Is a potent inhibitor of platelet aggregation induced by ADP, collagen, and thrombin. Induces neutrophil chemotaxis and inhibits the chemotaxis of human neutrophils toward fMLP, IL-8, and jarastatin itself. Directly activates an integrin-coupled signaling and modulate the MAPK pathway in different ways, leading the neutrophils to express different functional response. Induces Erk-2 translocation to nucleus and a delay of the spontaneous apoptosis of neutrophils. Increases the IL-8 mRNA levels in neutrophils. When injected simultaneously with melanoma cells in mice, jarastatin, flavoridin (FL) and kistrin (KR) significantly reduce tumor lung colonization. Inhibits mouse melanoma B16F10 cell growth in vitro. When it interacts with melanoma cells, it induces actin cytoskeleton rearrangement, increasing actin polymerization and PTK2/FAK1 phosphorylation. Interferes with NF-kappaB translocation in melanoma cells. The protein is Zinc metalloproteinase/disintegrin of Bothrops jararaca (Jararaca).